A 282-amino-acid chain; its full sequence is Bifunctional protein FolD (282 aa).

NADP(+) contacts are provided by residues 162-164, Ser-187, and Val-228; that span reads GRS.

This sequence belongs to the tetrahydrofolate dehydrogenase/cyclohydrolase family. Homodimer.

It carries out the reaction (6R)-5,10-methylene-5,6,7,8-tetrahydrofolate + NADP(+) = (6R)-5,10-methenyltetrahydrofolate + NADPH. It catalyses the reaction (6R)-5,10-methenyltetrahydrofolate + H2O = (6R)-10-formyltetrahydrofolate + H(+). It participates in one-carbon metabolism; tetrahydrofolate interconversion. Its function is as follows. Catalyzes the oxidation of 5,10-methylenetetrahydrofolate to 5,10-methenyltetrahydrofolate and then the hydrolysis of 5,10-methenyltetrahydrofolate to 10-formyltetrahydrofolate. The polypeptide is Bifunctional protein FolD (Thermus thermophilus (strain ATCC 27634 / DSM 579 / HB8)).